The following is a 349-amino-acid chain: D-arabinitol dehydrogenase 1 (349 aa).

Zn(2+)-binding residues include C46, H67, C97, C100, C103, C111, and E151.

Belongs to the zinc-containing alcohol dehydrogenase family. Requires Zn(2+) as cofactor.

It is found in the cell projection. It carries out the reaction D-arabinitol + NADP(+) = D-xylulose + NADPH + H(+). The enzyme catalyses D-arabinitol + NADP(+) = D-ribulose + NADPH + H(+). Its function is as follows. D-arabinitol dehydrogenase which mostly produces D-arabinitol in haustoria, the appendages of the parasitic fungus that penetrate the host's tissue and draws nutrients from it. D-arabinitol accumulation may serve as a carbohydrate storage compound. D-arabinitol is also capable of quenching reactive oxygen species involved in host plant defense reactions, thus providing protection for the rust fungus during the pathogenic interaction. This is D-arabinitol dehydrogenase 1 (ARD1) from Uromyces fabae (Rust fungus).